Reading from the N-terminus, the 122-residue chain is Small ribosomal subunit protein uS13 (122 aa).

The interval 99–122 is disordered; it reads RGQRTHTNARTRKGPAKAIAGKKK.

Belongs to the universal ribosomal protein uS13 family. As to quaternary structure, part of the 30S ribosomal subunit. Forms a loose heterodimer with protein S19. Forms two bridges to the 50S subunit in the 70S ribosome.

In terms of biological role, located at the top of the head of the 30S subunit, it contacts several helices of the 16S rRNA. In the 70S ribosome it contacts the 23S rRNA (bridge B1a) and protein L5 of the 50S subunit (bridge B1b), connecting the 2 subunits; these bridges are implicated in subunit movement. Contacts the tRNAs in the A and P-sites. The sequence is that of Small ribosomal subunit protein uS13 from Rhizobium etli (strain ATCC 51251 / DSM 11541 / JCM 21823 / NBRC 15573 / CFN 42).